We begin with the raw amino-acid sequence, 122 residues long: MALTNEEILNAVAEKTVLELVELISAFEEKFNVSAAAVAVAAPAGGAAAAEEQSEFNVELTSFGANKVAVIKAVREATGLGLKEAKDLVEGAPQVLKEGVSKEEGEELKKKLEEAGATVTLK.

Belongs to the bacterial ribosomal protein bL12 family. Homodimer. Part of the ribosomal stalk of the 50S ribosomal subunit. Forms a multimeric L10(L12)X complex, where L10 forms an elongated spine to which 2 to 4 L12 dimers bind in a sequential fashion. Binds GTP-bound translation factors.

Forms part of the ribosomal stalk which helps the ribosome interact with GTP-bound translation factors. Is thus essential for accurate translation. This Acinetobacter baumannii (strain AB0057) protein is Large ribosomal subunit protein bL12.